We begin with the raw amino-acid sequence, 347 residues long: tRNA N6-adenosine threonylcarbamoyltransferase (347 aa).

His-115 and His-119 together coordinate Fe cation. Residues 138 to 142, Asp-171, Gly-184, and Asn-277 contribute to the substrate site; that span reads LVSGG. Asp-305 is a Fe cation binding site.

It belongs to the KAE1 / TsaD family. Fe(2+) is required as a cofactor.

The protein resides in the cytoplasm. It carries out the reaction L-threonylcarbamoyladenylate + adenosine(37) in tRNA = N(6)-L-threonylcarbamoyladenosine(37) in tRNA + AMP + H(+). Required for the formation of a threonylcarbamoyl group on adenosine at position 37 (t(6)A37) in tRNAs that read codons beginning with adenine. Is involved in the transfer of the threonylcarbamoyl moiety of threonylcarbamoyl-AMP (TC-AMP) to the N6 group of A37, together with TsaE and TsaB. TsaD likely plays a direct catalytic role in this reaction. The sequence is that of tRNA N6-adenosine threonylcarbamoyltransferase from Polaromonas sp. (strain JS666 / ATCC BAA-500).